Consider the following 440-residue polypeptide: Adenylosuccinate synthetase (440 aa).

GTP contacts are provided by residues 13–19 (GDEGKGK) and 41–43 (GHT). The active-site Proton acceptor is the aspartate 14. Positions 14 and 41 each coordinate Mg(2+). IMP is bound by residues 14-17 (DEGK), 39-42 (NAGH), threonine 135, arginine 149, glutamine 230, threonine 245, and arginine 313. Histidine 42 acts as the Proton donor in catalysis. 309–315 (TVTKRKR) contacts substrate. GTP contacts are provided by residues arginine 315, 341–343 (KLD), and 423–425 (STG).

The protein belongs to the adenylosuccinate synthetase family. Homodimer. Mg(2+) serves as cofactor.

The protein localises to the cytoplasm. The enzyme catalyses IMP + L-aspartate + GTP = N(6)-(1,2-dicarboxyethyl)-AMP + GDP + phosphate + 2 H(+). The protein operates within purine metabolism; AMP biosynthesis via de novo pathway; AMP from IMP: step 1/2. Functionally, plays an important role in the de novo pathway of purine nucleotide biosynthesis. Catalyzes the first committed step in the biosynthesis of AMP from IMP. The protein is Adenylosuccinate synthetase of Methylobacillus flagellatus (strain ATCC 51484 / DSM 6875 / VKM B-1610 / KT).